The primary structure comprises 188 residues: Transcription factor E (188 aa).

Residues 9-98 (DLEVLRDVTL…SWRLNLREVL (90 aa)) enclose the HTH TFE/IIEalpha-type domain.

The protein belongs to the TFE family. Monomer. Interaction with RNA polymerase subunits RpoF and RpoE is necessary for Tfe stimulatory transcription activity. Able to interact with Tbp and RNA polymerase in the absence of DNA promoter. Interacts both with the preinitiation and elongation complexes.

In terms of biological role, transcription factor that plays a role in the activation of archaeal genes transcribed by RNA polymerase. Facilitates transcription initiation by enhancing TATA-box recognition by TATA-box-binding protein (Tbp), and transcription factor B (Tfb) and RNA polymerase recruitment. Not absolutely required for transcription in vitro, but particularly important in cases where Tbp or Tfb function is not optimal. It dynamically alters the nucleic acid-binding properties of RNA polymerases by stabilizing the initiation complex and destabilizing elongation complexes. Seems to translocate with the RNA polymerase following initiation and acts by binding to the non template strand of the transcription bubble in elongation complexes. The polypeptide is Transcription factor E (Methanopyrus kandleri (strain AV19 / DSM 6324 / JCM 9639 / NBRC 100938)).